Reading from the N-terminus, the 113-residue chain is Large ribosomal subunit protein bL17 (113 aa).

The protein belongs to the bacterial ribosomal protein bL17 family. Part of the 50S ribosomal subunit. Contacts protein L32.

This is Large ribosomal subunit protein bL17 from Clostridium botulinum (strain Alaska E43 / Type E3).